The chain runs to 600 residues: Elongation factor 4 (600 aa).

The region spanning 5 to 187 (KYIRNFSIIA…AIVNKLPPPK (183 aa)) is the tr-type G domain. GTP-binding positions include 17–22 (DHGKST) and 134–137 (NKID).

Belongs to the TRAFAC class translation factor GTPase superfamily. Classic translation factor GTPase family. LepA subfamily.

Its subcellular location is the cell inner membrane. It catalyses the reaction GTP + H2O = GDP + phosphate + H(+). Its function is as follows. Required for accurate and efficient protein synthesis under certain stress conditions. May act as a fidelity factor of the translation reaction, by catalyzing a one-codon backward translocation of tRNAs on improperly translocated ribosomes. Back-translocation proceeds from a post-translocation (POST) complex to a pre-translocation (PRE) complex, thus giving elongation factor G a second chance to translocate the tRNAs correctly. Binds to ribosomes in a GTP-dependent manner. The protein is Elongation factor 4 of Rickettsia felis (strain ATCC VR-1525 / URRWXCal2) (Rickettsia azadi).